A 270-amino-acid chain; its full sequence is 4-hydroxy-tetrahydrodipicolinate reductase (270 aa).

NAD(+)-binding positions include 11–16 (GAGGRM) and Glu37. Arg38 contacts NADP(+). Residues 101–103 (GTT) and 125–128 (APNM) contribute to the NAD(+) site. His158 acts as the Proton donor/acceptor in catalysis. (S)-2,3,4,5-tetrahydrodipicolinate is bound at residue His159. The active-site Proton donor is Lys162. Residue 168-169 (GT) coordinates (S)-2,3,4,5-tetrahydrodipicolinate.

It belongs to the DapB family.

It is found in the cytoplasm. The catalysed reaction is (S)-2,3,4,5-tetrahydrodipicolinate + NAD(+) + H2O = (2S,4S)-4-hydroxy-2,3,4,5-tetrahydrodipicolinate + NADH + H(+). The enzyme catalyses (S)-2,3,4,5-tetrahydrodipicolinate + NADP(+) + H2O = (2S,4S)-4-hydroxy-2,3,4,5-tetrahydrodipicolinate + NADPH + H(+). It participates in amino-acid biosynthesis; L-lysine biosynthesis via DAP pathway; (S)-tetrahydrodipicolinate from L-aspartate: step 4/4. In terms of biological role, catalyzes the conversion of 4-hydroxy-tetrahydrodipicolinate (HTPA) to tetrahydrodipicolinate. The chain is 4-hydroxy-tetrahydrodipicolinate reductase from Shewanella sp. (strain MR-4).